A 486-amino-acid polypeptide reads, in one-letter code: Alliin lyase 1 (486 aa).

The first 28 residues, M1–S28, serve as a signal peptide directing secretion. A propeptide spanning residues L29–A38 is cleaved from the precursor. One can recognise an EGF-like; atypical domain in the interval E51–A97. N57 carries an N-linked (GlcNAc...) asparagine glycan. 3 disulfides stabilise this stretch: C58-C77, C79-C88, and C82-C95. Position 130 to 138 (Y130 to F138) interacts with chloride. 2 N-linked (GlcNAc...) asparagine glycosylation sites follow: N184 and N229. An N6-(pyridoxal phosphate)lysine modification is found at K289. N366 carries an N-linked (GlcNAc...) asparagine glycan. C406 and C414 form a disulfide bridge.

This sequence belongs to the alliinase family. Homodimer. Requires pyridoxal 5'-phosphate as cofactor. Expressed in bulb (at protein level). Expressed in shoots.

The protein localises to the vacuole. The catalysed reaction is an S-alkyl-L-cysteine S-oxide = an S-alkyl sulfenate + 2-aminoprop-2-enoate. In terms of biological role, able to cleave the C-S bond of sulfoxide derivatives of Cys to produce allicin, thus giving rise to all sulfur compounds which are responsible for most of the properties of garlic, such as the specific smell and flavor as well as the health benefits like blood lipid or blood pressure lowering. This chain is Alliin lyase 1, found in Allium sativum (Garlic).